Reading from the N-terminus, the 188-residue chain is Probable manganese efflux pump MntP (188 aa).

The next 6 membrane-spanning stretches (helical) occupy residues 3–23 (FTAT…ASIG), 41–61 (LIFG…GILA), 66–86 (LEWN…RMII), 106–128 (WLLV…GLAF), 143–163 (ATLI…PMLG), and 168–188 (ILGG…HFHG).

Belongs to the MntP (TC 9.B.29) family.

Its subcellular location is the cell inner membrane. In terms of biological role, probably functions as a manganese efflux pump. This Salmonella typhimurium (strain LT2 / SGSC1412 / ATCC 700720) protein is Probable manganese efflux pump MntP.